A 131-amino-acid polypeptide reads, in one-letter code: Large ribosomal subunit protein bL12 (131 aa).

This sequence belongs to the bacterial ribosomal protein bL12 family. As to quaternary structure, homodimer. Part of the ribosomal stalk of the 50S ribosomal subunit. Forms a multimeric L10(L12)X complex, where L10 forms an elongated spine to which 2 to 4 L12 dimers bind in a sequential fashion. Binds GTP-bound translation factors.

Forms part of the ribosomal stalk which helps the ribosome interact with GTP-bound translation factors. Is thus essential for accurate translation. This chain is Large ribosomal subunit protein bL12, found in Prochlorococcus marinus (strain MIT 9313).